A 1116-amino-acid chain; its full sequence is uncharacterized protein (1116 aa).

EF-hand domains follow at residues 8–43 (EEQT…SGLA), 42–77 (LAPQ…VALA), 166–201 (LSTE…INLL), and 292–327 (LPED…IKLK). EH domains follow at residues 9–106 (EQTA…DSSK), 134–224 (EMTR…AAST), and 259–348 (DLTS…VAPL). The Ca(2+) site is built by Asp305, Asn307, Asn309, Lys311, and Glu316. Disordered regions lie at residues 360 to 454 (PSVV…NSPT), 703 to 774 (SVNL…ASTV), 812 to 890 (TSLS…NTSA), 909 to 978 (PFAT…SPQI), 1004 to 1024 (TTTH…ENQY), 1044 to 1066 (SNEV…DDEL), and 1095 to 1116 (QAAE…AGHH). Residues 371–381 (NPNPTLAPNPT) show a composition bias toward pro residues. The segment covering 401–416 (FSPTLAPQHTSSNATK) has biased composition (polar residues). Residues 565–707 (KAQTEQVNRE…EDGLKSVNLT (143 aa)) adopt a coiled-coil conformation. Residues 723 to 749 (SFTSNGITTDKPTLPDTTSSVPTQHNS) are compositionally biased toward polar residues. Low complexity-rich tracts occupy residues 755-774 (NTLR…ASTV) and 812-827 (TSLS…SLDS). A compositionally biased stretch (polar residues) spans 864 to 890 (SKLTGSARNTAEPVENTSAEPIENTSA). Residues 957-969 (EIDDDESSSDEEP) show a composition bias toward acidic residues. Acidic residues-rich tracts occupy residues 1055–1066 (TANESDNDDDEL) and 1104–1116 (NSST…AGHH).

It localises to the cytoplasm. The protein localises to the cytoskeleton. This is an uncharacterized protein from Schizosaccharomyces pombe (strain 972 / ATCC 24843) (Fission yeast).